A 364-amino-acid chain; its full sequence is Histidinol-phosphate aminotransferase (364 aa).

K225 is modified (N6-(pyridoxal phosphate)lysine).

Belongs to the class-II pyridoxal-phosphate-dependent aminotransferase family. Histidinol-phosphate aminotransferase subfamily. As to quaternary structure, homodimer. Pyridoxal 5'-phosphate serves as cofactor.

It catalyses the reaction L-histidinol phosphate + 2-oxoglutarate = 3-(imidazol-4-yl)-2-oxopropyl phosphate + L-glutamate. The protein operates within amino-acid biosynthesis; L-histidine biosynthesis; L-histidine from 5-phospho-alpha-D-ribose 1-diphosphate: step 7/9. The protein is Histidinol-phosphate aminotransferase of Sulfurovum sp. (strain NBC37-1).